We begin with the raw amino-acid sequence, 223 residues long: DNA mismatch repair protein MutH (223 aa).

Belongs to the MutH family.

The protein localises to the cytoplasm. In terms of biological role, sequence-specific endonuclease that cleaves unmethylated GATC sequences. It is involved in DNA mismatch repair. In Haemophilus influenzae (strain PittEE), this protein is DNA mismatch repair protein MutH.